The sequence spans 307 residues: ATP-dependent (S)-NAD(P)H-hydrate dehydratase (307 aa).

Residues 1–291 enclose the YjeF C-terminal domain; sequence MDHFLKLLPK…DEIPKLVRDV (291 aa). Residues Gly96 and 150–156 each bind (6S)-NADPHX; that span reads NIVEFSR. Residues 194-198 and 214-223 each bind ATP; these read KGEVD and SSLRRCGGQG. Asp224 provides a ligand contact to (6S)-NADPHX.

This sequence belongs to the NnrD/CARKD family. The cofactor is Mg(2+).

The enzyme catalyses (6S)-NADHX + ATP = ADP + phosphate + NADH + H(+). It catalyses the reaction (6S)-NADPHX + ATP = ADP + phosphate + NADPH + H(+). Its function is as follows. Catalyzes the dehydration of the S-form of NAD(P)HX at the expense of ATP, which is converted to ADP. Together with NAD(P)HX epimerase, which catalyzes the epimerization of the S- and R-forms, the enzyme allows the repair of both epimers of NAD(P)HX, a damaged form of NAD(P)H that is a result of enzymatic or heat-dependent hydration. This Caenorhabditis briggsae protein is ATP-dependent (S)-NAD(P)H-hydrate dehydratase.